A 183-amino-acid chain; its full sequence is Large ribosomal subunit protein uL5 (183 aa).

This sequence belongs to the universal ribosomal protein uL5 family. In terms of assembly, part of the 50S ribosomal subunit; part of the 5S rRNA/L5/L18/L25 subcomplex. Contacts the 5S rRNA and the P site tRNA. Forms a bridge to the 30S subunit in the 70S ribosome.

Functionally, this is one of the proteins that bind and probably mediate the attachment of the 5S RNA into the large ribosomal subunit, where it forms part of the central protuberance. In the 70S ribosome it contacts protein S13 of the 30S subunit (bridge B1b), connecting the 2 subunits; this bridge is implicated in subunit movement. Contacts the P site tRNA; the 5S rRNA and some of its associated proteins might help stabilize positioning of ribosome-bound tRNAs. The polypeptide is Large ribosomal subunit protein uL5 (Chlorobaculum tepidum (strain ATCC 49652 / DSM 12025 / NBRC 103806 / TLS) (Chlorobium tepidum)).